The following is a 429-amino-acid chain: Probable M18 family aminopeptidase 2 (429 aa).

3 residues coordinate Zn(2+): histidine 82, histidine 156, and histidine 401.

The protein belongs to the peptidase M18 family. Zn(2+) is required as a cofactor.

In Pseudomonas fluorescens (strain SBW25), this protein is Probable M18 family aminopeptidase 2.